Here is an 89-residue protein sequence, read N- to C-terminus: HssA/B-like protein 21 (89 aa).

It belongs to the hssA/B family.

This is HssA/B-like protein 21 (hssl21) from Dictyostelium discoideum (Social amoeba).